The chain runs to 121 residues: Large ribosomal subunit protein eL18 (121 aa).

Belongs to the eukaryotic ribosomal protein eL18 family. As to quaternary structure, part of the 50S ribosomal subunit.

The polypeptide is Large ribosomal subunit protein eL18 (Thermococcus kodakarensis (strain ATCC BAA-918 / JCM 12380 / KOD1) (Pyrococcus kodakaraensis (strain KOD1))).